We begin with the raw amino-acid sequence, 767 residues long: 5-methyltetrahydropteroyltriglutamate--homocysteine methyltransferase (767 aa).

5-methyltetrahydropteroyltri-L-glutamate is bound by residues 16-19 (RELK) and lysine 122. Residues 443–445 (IGS) and glutamate 496 each bind L-homocysteine. L-methionine-binding positions include 443 to 445 (IGS) and glutamate 496. 5-methyltetrahydropteroyltri-L-glutamate-binding positions include 527–528 (RC) and tryptophan 573. Residue aspartate 611 participates in L-homocysteine binding. Aspartate 611 provides a ligand contact to L-methionine. Glutamate 617 lines the 5-methyltetrahydropteroyltri-L-glutamate pocket. The Zn(2+) site is built by histidine 653, cysteine 655, and glutamate 677. Histidine 706 serves as the catalytic Proton donor. Cysteine 738 is a Zn(2+) binding site.

This sequence belongs to the vitamin-B12 independent methionine synthase family. It depends on Zn(2+) as a cofactor.

It carries out the reaction 5-methyltetrahydropteroyltri-L-glutamate + L-homocysteine = tetrahydropteroyltri-L-glutamate + L-methionine. It functions in the pathway amino-acid biosynthesis; L-methionine biosynthesis via de novo pathway; L-methionine from L-homocysteine (MetE route): step 1/1. In terms of biological role, catalyzes the transfer of a methyl group from 5-methyltetrahydrofolate to homocysteine resulting in methionine formation. This chain is 5-methyltetrahydropteroyltriglutamate--homocysteine methyltransferase, found in Ectopseudomonas mendocina (strain ymp) (Pseudomonas mendocina).